The sequence spans 393 residues: Na(+)/H(+) antiporter NhaA (393 aa).

The next 11 helical transmembrane spans lie at 24 to 44, 58 to 78, 96 to 116, 126 to 146, 155 to 175, 178 to 198, 214 to 234, 267 to 287, 300 to 320, 338 to 358, and 369 to 389; these read GGLV…SPLA, LSLL…LVGL, ILPG…YILF, GWAI…SLFG, IFLA…IALF, SDLN…LYGM, AVLW…GVLL, VAFI…FSGV, VAAG…FLLV, GVAA…LLAF, and MGIL…LATF.

Belongs to the NhaA Na(+)/H(+) (TC 2.A.33) antiporter family.

Its subcellular location is the cell inner membrane. It carries out the reaction Na(+)(in) + 2 H(+)(out) = Na(+)(out) + 2 H(+)(in). Na(+)/H(+) antiporter that extrudes sodium in exchange for external protons. This chain is Na(+)/H(+) antiporter NhaA, found in Rhizobium etli (strain ATCC 51251 / DSM 11541 / JCM 21823 / NBRC 15573 / CFN 42).